We begin with the raw amino-acid sequence, 315 residues long: NAD(P)H-dependent anabolic L-arginine dehydrogenase DauB (315 aa).

It belongs to the ornithine cyclodeaminase/mu-crystallin family.

The enzyme catalyses L-arginine + NAD(+) + H2O = 5-guanidino-2-oxopentanoate + NH4(+) + NADH + H(+). It catalyses the reaction L-arginine + NADP(+) + H2O = 5-guanidino-2-oxopentanoate + NH4(+) + NADPH + H(+). Involved in the anabolism of D-lysine and D-arginine. Under aerobic conditions, the arginine succinyltransferase (AST) and arginine transaminase (ATA) pathways are 2 major routes for L-arginine utilization as the sole source of carbon and nitrogen. The D-to-L racemization of arginine by DauA and DauB is necessary, before to be channeled into the AST and/or ATA pathways. DauB catalyzes the synthesis of L-arginine from 2-ketoarginine (2-KA) and ammonium. The protein is NAD(P)H-dependent anabolic L-arginine dehydrogenase DauB of Pseudomonas aeruginosa (strain ATCC 15692 / DSM 22644 / CIP 104116 / JCM 14847 / LMG 12228 / 1C / PRS 101 / PAO1).